Reading from the N-terminus, the 159-residue chain is Aphid transmission protein (159 aa).

Belongs to the caulimoviridae ORF II family.

This protein is involved in virus transmission. The chain is Aphid transmission protein from Cauliflower mosaic virus (strain CM-1841) (CaMV).